The following is a 312-amino-acid chain: tRNA dimethylallyltransferase (312 aa).

11-18 is a binding site for ATP; that stretch reads GLTATGKT. A substrate-binding site is contributed by 13–18; that stretch reads TATGKT. The segment at 36–39 is interaction with substrate tRNA; that stretch reads DSMC.

This sequence belongs to the IPP transferase family. In terms of assembly, monomer. The cofactor is Mg(2+).

It carries out the reaction adenosine(37) in tRNA + dimethylallyl diphosphate = N(6)-dimethylallyladenosine(37) in tRNA + diphosphate. Its function is as follows. Catalyzes the transfer of a dimethylallyl group onto the adenine at position 37 in tRNAs that read codons beginning with uridine, leading to the formation of N6-(dimethylallyl)adenosine (i(6)A). The chain is tRNA dimethylallyltransferase from Caldicellulosiruptor bescii (strain ATCC BAA-1888 / DSM 6725 / KCTC 15123 / Z-1320) (Anaerocellum thermophilum).